The following is a 540-amino-acid chain: MTTSLQDGQSAAGRAAARDSPLAAQVCGAAQGRGDARDLAPAPWLHARALLPPPDATRGCAADRRKKKDLDVLEMPSIPNPFPELCCSPFTSVLSAGLFPKANSRKKQVIKVYSEDETSRALEVPSDITARDVCQLLILKNHYIDDHSWTLFEHLPHVGLERTIEDHELVIEVLSNWGMEEENKLYFRKNYAKYEFFKNPMYFFPEHMVSFATETNGEISPTQILQMFLSSSTYPEIHGFLHAKEQGKKSWKKIYFLLRRSGLYFSTKGTSKEPRHLQFFSEFGNSDIYVSLAGKKKHGAPTNYGFCFKPNKAGGPRDLKMLCAEEEQSRTCWVTAIRLLKYGMQLYQNYMHPYQGRSGYSSQSISPMRSISENSRVAMDFSGQKTRVIENPTEALSVAVEEGLAWRKKGCLRLGSHGSPTASSQSSATSMAIHRSQPWFHHKMSREEAQRLIIQQGLVDGVFLVRDSQSNPKTFVLSMSHGQKIKHFQIIPVEDDGEMFHTLDDGHTRFTDLIQLVEFYQLNKGVLPCKLKHYCARIAL.

Positions 1-23 are disordered; the sequence is MTTSLQDGQSAAGRAAARDSPLA. Threonine 2 is modified (N-acetylthreonine). Residues 106-192 form the Ras-associating domain; sequence KKQVIKVYSE…NKLYFRKNYA (87 aa). Residues 234-342 enclose the PH domain; that stretch reads YPEIHGFLHA…WVTAIRLLKY (109 aa). Phosphoserine occurs at positions 372 and 375. An SH2 domain is found at 439 to 535; the sequence is WFHHKMSREE…VLPCKLKHYC (97 aa).

The protein belongs to the GRB7/10/14 family. In terms of assembly, interacts with the cytoplasmic domain of the autophosphorylated insulin receptor, through the SH2 domain. Interacts with GRB14 (via BPS domain); this interaction protects the tyrosines in the activation loop on INSR from dephosphorylation. Binds to the ankyrin repeat region of TNKS2 via its N-terminus. Interacts with activated NRAS. Interacts (via SH2 domain) with TEK/TIE2 (tyrosine phosphorylated). In terms of processing, phosphorylated on serine residues. Phosphorylated on tyrosine residues by TEK/TIE2.

Its subcellular location is the cytoplasm. It localises to the endosome membrane. In terms of biological role, adapter protein which modulates coupling of cell surface receptor kinases with specific signaling pathways. Binds to, and suppresses signals from, the activated insulin receptor (INSR). Potent inhibitor of insulin-stimulated MAPK3 phosphorylation. Plays a critical role regulating PDPK1 membrane translocation in response to insulin stimulation and serves as an adapter protein to recruit PDPK1 to activated insulin receptor, thus promoting PKB/AKT1 phosphorylation and transduction of the insulin signal. This chain is Growth factor receptor-bound protein 14 (GRB14), found in Bos taurus (Bovine).